The primary structure comprises 164 residues: MTCQTYNLFVLSVIMIYYGHTASSLNLVQLQDDIDKLKADFNSSHSDVADGGPIIVEKLKNWTERNEKRIILSQIVSMYLEMLENTDKSKPHIKHISEELYTLKNNLNDGTKKVKDIMDLAKLQMNDLRIHRKAANDLFSVLQKLVDPPSSKRKRSQCLRRCSC.

The N-terminal stretch at 1–19 (MTCQTYNLFVLSVIMIYYG) is a signal peptide. Asparagine 42 and asparagine 61 each carry an N-linked (GlcNAc...) asparagine glycan.

It belongs to the type II (or gamma) interferon family. As to quaternary structure, homodimer.

The protein resides in the secreted. In terms of biological role, produced by lymphocytes activated by specific antigens or mitogens. IFN-gamma, in addition to having antiviral activity, has important immunoregulatory functions. It is a potent activator of macrophages, it has antiproliferative effects on transformed cells and it can potentiate the antiviral and antitumor effects of the type I interferons. The protein is Interferon gamma (IFNG) of Coturnix japonica (Japanese quail).